Here is a 313-residue protein sequence, read N- to C-terminus: Ribosomal RNA small subunit methyltransferase H (313 aa).

Residues 35–37 (GGH), D55, F80, D102, and Q109 each bind S-adenosyl-L-methionine.

Belongs to the methyltransferase superfamily. RsmH family.

It is found in the cytoplasm. The catalysed reaction is cytidine(1402) in 16S rRNA + S-adenosyl-L-methionine = N(4)-methylcytidine(1402) in 16S rRNA + S-adenosyl-L-homocysteine + H(+). Functionally, specifically methylates the N4 position of cytidine in position 1402 (C1402) of 16S rRNA. The sequence is that of Ribosomal RNA small subunit methyltransferase H from Shewanella denitrificans (strain OS217 / ATCC BAA-1090 / DSM 15013).